The following is a 296-amino-acid chain: 4-hydroxy-tetrahydrodipicolinate synthase (296 aa).

Residue T50 coordinates pyruvate. Y138 functions as the Proton donor/acceptor in the catalytic mechanism. Catalysis depends on K166, which acts as the Schiff-base intermediate with substrate. I208 contributes to the pyruvate binding site.

This sequence belongs to the DapA family. As to quaternary structure, homotetramer; dimer of dimers.

The protein resides in the cytoplasm. The catalysed reaction is L-aspartate 4-semialdehyde + pyruvate = (2S,4S)-4-hydroxy-2,3,4,5-tetrahydrodipicolinate + H2O + H(+). The protein operates within amino-acid biosynthesis; L-lysine biosynthesis via DAP pathway; (S)-tetrahydrodipicolinate from L-aspartate: step 3/4. Functionally, catalyzes the condensation of (S)-aspartate-beta-semialdehyde [(S)-ASA] and pyruvate to 4-hydroxy-tetrahydrodipicolinate (HTPA). This is 4-hydroxy-tetrahydrodipicolinate synthase from Thiobacillus denitrificans (strain ATCC 25259 / T1).